The chain runs to 416 residues: Multifunctional CCA protein (416 aa).

Residues glycine 8 and arginine 11 each contribute to the ATP site. Residues glycine 8 and arginine 11 each contribute to the CTP site. Mg(2+) is bound by residues aspartate 21 and aspartate 23. Residues arginine 91, arginine 138, and arginine 141 each coordinate ATP. CTP is bound by residues arginine 91, arginine 138, and arginine 141. Positions 229–331 (TGLHQELVSD…YELLQRCDAF (103 aa)) constitute an HD domain.

Belongs to the tRNA nucleotidyltransferase/poly(A) polymerase family. Bacterial CCA-adding enzyme type 1 subfamily. As to quaternary structure, monomer. Can also form homodimers and oligomers. Mg(2+) serves as cofactor. Ni(2+) is required as a cofactor.

It carries out the reaction a tRNA precursor + 2 CTP + ATP = a tRNA with a 3' CCA end + 3 diphosphate. The catalysed reaction is a tRNA with a 3' CCA end + 2 CTP + ATP = a tRNA with a 3' CCACCA end + 3 diphosphate. Functionally, catalyzes the addition and repair of the essential 3'-terminal CCA sequence in tRNAs without using a nucleic acid template. Adds these three nucleotides in the order of C, C, and A to the tRNA nucleotide-73, using CTP and ATP as substrates and producing inorganic pyrophosphate. tRNA 3'-terminal CCA addition is required both for tRNA processing and repair. Also involved in tRNA surveillance by mediating tandem CCA addition to generate a CCACCA at the 3' terminus of unstable tRNAs. While stable tRNAs receive only 3'-terminal CCA, unstable tRNAs are marked with CCACCA and rapidly degraded. The chain is Multifunctional CCA protein from Xylella fastidiosa (strain M12).